A 92-amino-acid polypeptide reads, in one-letter code: DNA-directed RNA polymerase subunit Rpo11 (92 aa).

It belongs to the archaeal Rpo11/eukaryotic RPB11/RPC19 RNA polymerase subunit family. Part of the RNA polymerase complex.

It is found in the cytoplasm. It catalyses the reaction RNA(n) + a ribonucleoside 5'-triphosphate = RNA(n+1) + diphosphate. In terms of biological role, DNA-dependent RNA polymerase (RNAP) catalyzes the transcription of DNA into RNA using the four ribonucleoside triphosphates as substrates. This Halorubrum lacusprofundi (strain ATCC 49239 / DSM 5036 / JCM 8891 / ACAM 34) protein is DNA-directed RNA polymerase subunit Rpo11.